A 107-amino-acid chain; its full sequence is Ig kappa chain V-VI region J539 (107 aa).

A framework-1 region spans residues 1–23 (EIVLTQSPAITAASLGQKVTITC). An intrachain disulfide couples Cys23 to Cys87. Residues 24 to 33 (SASSSVSSLH) form a complementarity-determining-1 region. The segment at 34–48 (WYQQKSGTSPKPWIY) is framework-2. A complementarity-determining-2 region spans residues 49–55 (EISKLAS). Residues 56 to 87 (GVPARFSGSGSGTSYSLTINTMEAEDAAIYYC) are framework-3. Residues 88–96 (QQWTYPLIT) are complementarity-determining-3. The framework-4 stretch occupies residues 97-106 (FGAGTKLELK).

This chain is Ig kappa chain V-VI region J539, found in Mus musculus (Mouse).